We begin with the raw amino-acid sequence, 257 residues long: NH(3)-dependent NAD(+) synthetase (257 aa).

28–35 (GISGGVDS) provides a ligand contact to ATP. Asp34 lines the Mg(2+) pocket. Arg109 is a binding site for deamido-NAD(+). Thr129 is an ATP binding site. Mg(2+) is bound at residue Glu134. The deamido-NAD(+) site is built by Lys142 and Asp149. ATP is bound by residues Lys158 and Ser180. 240 to 241 (HK) lines the deamido-NAD(+) pocket.

Belongs to the NAD synthetase family. Homodimer.

The catalysed reaction is deamido-NAD(+) + NH4(+) + ATP = AMP + diphosphate + NAD(+) + H(+). The protein operates within cofactor biosynthesis; NAD(+) biosynthesis; NAD(+) from deamido-NAD(+) (ammonia route): step 1/1. In terms of biological role, catalyzes the ATP-dependent amidation of deamido-NAD to form NAD. Uses ammonia as a nitrogen source. This Pyrococcus horikoshii (strain ATCC 700860 / DSM 12428 / JCM 9974 / NBRC 100139 / OT-3) protein is NH(3)-dependent NAD(+) synthetase.